The sequence spans 188 residues: MKVVRAFVGFFTSKSINEVAERIKKEVDLKIMGKWVEPQNVHMTLQFLGDITEAQAIEVIKNLQEISKKNIPFRIKYKGLGVFPDVKRPRVLWIGVSEGANKLTNLAKEVARLNAKKGIIPKNSKNFVPHVTICRIKSYDRKTLNELLRKYRTVEFGEDEVNKIALISSTLTSVGPIYTVVEEFYLGG.

Histidine 42 functions as the Proton donor in the catalytic mechanism. 2 short sequence motifs (HXTX) span residues histidine 42–leucine 45 and histidine 130–isoleucine 133. The active-site Proton acceptor is histidine 130.

Belongs to the 2H phosphoesterase superfamily. ThpR family.

It catalyses the reaction a 3'-end 2',3'-cyclophospho-ribonucleotide-RNA + H2O = a 3'-end 2'-phospho-ribonucleotide-RNA + H(+). In terms of biological role, hydrolyzes RNA 2',3'-cyclic phosphodiester to an RNA 2'-phosphomonoester. The protein is RNA 2',3'-cyclic phosphodiesterase of Aquifex aeolicus (strain VF5).